We begin with the raw amino-acid sequence, 137 residues long: Basic phospholipase A2 beta-bungarotoxin A-AL4 chain (137 aa).

The signal sequence occupies residues 1 to 10; the sequence is LAVCVSLLGA. Residues 11–18 constitute a propeptide that is removed on maturation; it reads ANIPPQHL. 6 cysteine pairs are disulfide-bonded: cysteine 45/cysteine 137, cysteine 47/cysteine 63, cysteine 62/cysteine 118, cysteine 69/cysteine 111, cysteine 79/cysteine 104, and cysteine 97/cysteine 109. Tyrosine 46, glycine 48, and glycine 50 together coordinate Ca(2+). The active site involves histidine 66. Aspartate 67 contacts Ca(2+). Residue aspartate 112 is part of the active site.

This sequence belongs to the phospholipase A2 family. Group I subfamily. D49 sub-subfamily. Heterodimer; disulfide-linked. The A chains have phospholipase A2 activity and the B chains show homology with the basic protease inhibitors. It depends on Ca(2+) as a cofactor. Expressed by the venom gland.

It is found in the secreted. The enzyme catalyses a 1,2-diacyl-sn-glycero-3-phosphocholine + H2O = a 1-acyl-sn-glycero-3-phosphocholine + a fatty acid + H(+). Functionally, snake venom phospholipase A2 (PLA2) that inhibits neuromuscular transmission by blocking acetylcholine release from the nerve termini. PLA2 catalyzes the calcium-dependent hydrolysis of the 2-acyl groups in 3-sn-phosphoglycerides. The protein is Basic phospholipase A2 beta-bungarotoxin A-AL4 chain of Bungarus multicinctus (Many-banded krait).